The primary structure comprises 191 residues: Thymidine kinase (191 aa).

ATP contacts are provided by residues 9–16 (GSMNSGKT) and 85–88 (DESQ). Residue E86 is the Proton acceptor of the active site. Zn(2+)-binding residues include C143, C146, C181, and C184.

Belongs to the thymidine kinase family. In terms of assembly, homotetramer.

It is found in the cytoplasm. The catalysed reaction is thymidine + ATP = dTMP + ADP + H(+). The sequence is that of Thymidine kinase from Listeria monocytogenes serovar 1/2a (strain ATCC BAA-679 / EGD-e).